A 692-amino-acid chain; its full sequence is Elongation factor G (692 aa).

The tr-type G domain occupies 8–282 (ENTRNIGIMA…AVIDYLPSPL (275 aa)). GTP-binding positions include 17–24 (AHIDAGKT), 81–85 (DTPGH), and 135–138 (NKMD).

This sequence belongs to the TRAFAC class translation factor GTPase superfamily. Classic translation factor GTPase family. EF-G/EF-2 subfamily.

Its subcellular location is the cytoplasm. In terms of biological role, catalyzes the GTP-dependent ribosomal translocation step during translation elongation. During this step, the ribosome changes from the pre-translocational (PRE) to the post-translocational (POST) state as the newly formed A-site-bound peptidyl-tRNA and P-site-bound deacylated tRNA move to the P and E sites, respectively. Catalyzes the coordinated movement of the two tRNA molecules, the mRNA and conformational changes in the ribosome. This is Elongation factor G from Bacillus cereus (strain ZK / E33L).